We begin with the raw amino-acid sequence, 244 residues long: 2,5-diamino-6-ribosylamino-4(3H)-pyrimidinone 5'-phosphate reductase (244 aa).

NADP(+) is bound by residues Thr79, Asp83, Val159, and 182–186; that span reads GANVI.

It belongs to the HTP reductase family. As to quaternary structure, homodimer.

It carries out the reaction 2,5-diamino-6-(1-D-ribitylamino)pyrimidin-4(3H)-one 5'-phosphate + NADP(+) = 2,5-diamino-6-(1-D-ribosylamino)pyrimidin-4(3H)-one 5'-phosphate + NADPH + H(+). The catalysed reaction is 2,5-diamino-6-(1-D-ribitylamino)pyrimidin-4(3H)-one 5'-phosphate + NAD(+) = 2,5-diamino-6-(1-D-ribosylamino)pyrimidin-4(3H)-one 5'-phosphate + NADH + H(+). The protein operates within cofactor biosynthesis; riboflavin biosynthesis. In terms of biological role, catalyzes an early step in riboflavin biosynthesis, the NADPH-dependent reduction of the ribose side chain of 2,5-diamino-6-ribosylamino-4(3H)-pyrimidinone 5'-phosphate, yielding 2,5-diamino-6-ribitylamino-4(3H)-pyrimidinone 5'-phosphate. This chain is 2,5-diamino-6-ribosylamino-4(3H)-pyrimidinone 5'-phosphate reductase (RIB7), found in Saccharomyces cerevisiae (strain ATCC 204508 / S288c) (Baker's yeast).